Here is a 123-residue protein sequence, read N- to C-terminus: Probable ketoamine kinase in tonB 3'region (123 aa).

Asp26 (proton acceptor) is an active-site residue.

Belongs to the fructosamine kinase family.

In terms of biological role, ketoamine kinase that phosphorylates ketoamines on the third carbon of the sugar moiety to generate ketoamine 3-phosphate. This Klebsiella pneumoniae protein is Probable ketoamine kinase in tonB 3'region.